The following is a 974-amino-acid chain: Alpha-1,4 glucan phosphorylase L-2 isozyme, chloroplastic/amyloplastic (974 aa).

The transit peptide at 1–81 directs the protein to the chloroplast; sequence MATFAVSGLN…LDVFQPDSTS (81 aa). Positions 509-551 are disordered; sequence ADVEKAADEEQEEEGKDDSKDEETEAVKAETTNEEEETEVKKV. Residues 517–532 are compositionally biased toward acidic residues; the sequence is EEQEEEGKDDSKDEET. An N6-(pyridoxal phosphate)lysine modification is found at Lys-820.

This sequence belongs to the glycogen phosphorylase family. Pyridoxal 5'-phosphate is required as a cofactor. In terms of tissue distribution, leaves.

The protein localises to the plastid. Its subcellular location is the chloroplast. The protein resides in the amyloplast. It catalyses the reaction [(1-&gt;4)-alpha-D-glucosyl](n) + phosphate = [(1-&gt;4)-alpha-D-glucosyl](n-1) + alpha-D-glucose 1-phosphate. In terms of biological role, phosphorylase is an important allosteric enzyme in carbohydrate metabolism. Enzymes from different sources differ in their regulatory mechanisms and in their natural substrates. However, all known phosphorylases share catalytic and structural properties. The polypeptide is Alpha-1,4 glucan phosphorylase L-2 isozyme, chloroplastic/amyloplastic (STP-1) (Solanum tuberosum (Potato)).